The sequence spans 292 residues: Small ribosomal subunit biogenesis GTPase RsgA (292 aa).

Residues 64 to 221 (RSELFRPAVA…LVDTPGFSSL (158 aa)) enclose the CP-type G domain. GTP-binding positions include 113-116 (NKMD) and 164-172 (GPSGVGKST). Zn(2+) is bound by residues cysteine 245, cysteine 250, histidine 252, and cysteine 258.

Belongs to the TRAFAC class YlqF/YawG GTPase family. RsgA subfamily. In terms of assembly, monomer. Associates with 30S ribosomal subunit, binds 16S rRNA. Zn(2+) is required as a cofactor.

It is found in the cytoplasm. Its function is as follows. One of several proteins that assist in the late maturation steps of the functional core of the 30S ribosomal subunit. Helps release RbfA from mature subunits. May play a role in the assembly of ribosomal proteins into the subunit. Circularly permuted GTPase that catalyzes slow GTP hydrolysis, GTPase activity is stimulated by the 30S ribosomal subunit. In Clostridium botulinum (strain 657 / Type Ba4), this protein is Small ribosomal subunit biogenesis GTPase RsgA.